A 500-amino-acid polypeptide reads, in one-letter code: Probable lipoprotein aminopeptidase LpqL (500 aa).

Residues 1–24 (MVNKSRMMPAVLAVAVVVAFLTTG) form the signal peptide. C25 carries N-palmitoyl cysteine lipidation. C25 carries S-diacylglycerol cysteine lipidation. The region spanning 140-231 (VTGPLVAAPA…VTKSVGFQLR (92 aa)) is the PA domain. Residues H271 and D283 each coordinate Zn(2+). E316 (proton acceptor) is an active-site residue. Positions 317, 345, and 448 each coordinate Zn(2+).

This sequence belongs to the peptidase M28 family. M28A subfamily. Requires Zn(2+) as cofactor. Post-translationally, modified by Lgt on Cys-25 with an S-linked diacylglycerol with a mixture of C16 and C19 fatty acids (palmitic and tuberculostearic acid), signal peptide is removed by LspA, modified by Lnt with an amide-linked mixture of C16 and C19 fatty acids, expressed in M.bovis.

It is found in the cell membrane. It carries out the reaction Release of an N-terminal amino acid, Xaa-|-Yaa-, in which Xaa is preferably Leu, but may be other amino acids including Pro although not Arg or Lys, and Yaa may be Pro. Amino acid amides and methyl esters are also readily hydrolyzed, but rates on arylamides are exceedingly low.. In terms of biological role, an aminopeptidase; acts on free N-terminal amino groups with a very strong preference for Leu in the first position. The sequence is that of Probable lipoprotein aminopeptidase LpqL (lpqL) from Mycobacterium tuberculosis (strain ATCC 25618 / H37Rv).